Reading from the N-terminus, the 284-residue chain is RNase adapter protein RapZ (284 aa).

An ATP-binding site is contributed by 8–15; that stretch reads GRSGSGKS. Residue 56–59 coordinates GTP; it reads DVRN. An RNA-binding region spans residues 266-284; it reads RSRGKNVQSRHRTLEKRKT.

This sequence belongs to the RapZ-like family. RapZ subfamily. In terms of assembly, homotrimer.

Modulates the synthesis of GlmS, by affecting the processing and stability of the regulatory small RNA GlmZ. When glucosamine-6-phosphate (GlcN6P) concentrations are high in the cell, RapZ binds GlmZ and targets it to cleavage by RNase E. Consequently, GlmZ is inactivated and unable to activate GlmS synthesis. Under low GlcN6P concentrations, RapZ is sequestered and inactivated by an other regulatory small RNA, GlmY, preventing GlmZ degradation and leading to synthesis of GlmS. The chain is RNase adapter protein RapZ from Escherichia fergusonii (strain ATCC 35469 / DSM 13698 / CCUG 18766 / IAM 14443 / JCM 21226 / LMG 7866 / NBRC 102419 / NCTC 12128 / CDC 0568-73).